The sequence spans 352 residues: Ferrochelatase (352 aa).

Fe cation contacts are provided by His-222 and Glu-303.

The protein belongs to the ferrochelatase family.

The protein resides in the cytoplasm. It catalyses the reaction heme b + 2 H(+) = protoporphyrin IX + Fe(2+). It functions in the pathway porphyrin-containing compound metabolism; protoheme biosynthesis; protoheme from protoporphyrin-IX: step 1/1. In terms of biological role, catalyzes the ferrous insertion into protoporphyrin IX. This Brucella abortus (strain S19) protein is Ferrochelatase.